Here is a 426-residue protein sequence, read N- to C-terminus: 3-phosphoshikimate 1-carboxyvinyltransferase (426 aa).

3-phosphoshikimate-binding residues include Lys-20, Ser-21, and Arg-25. Lys-20 lines the phosphoenolpyruvate pocket. 2 residues coordinate phosphoenolpyruvate: Gly-92 and Arg-120. Residues Ser-166, Gln-168, Asp-312, and Lys-339 each contribute to the 3-phosphoshikimate site. Gln-168 lines the phosphoenolpyruvate pocket. Asp-312 functions as the Proton acceptor in the catalytic mechanism. Arg-385 contacts phosphoenolpyruvate.

It belongs to the EPSP synthase family. In terms of assembly, monomer.

Its subcellular location is the cytoplasm. It carries out the reaction 3-phosphoshikimate + phosphoenolpyruvate = 5-O-(1-carboxyvinyl)-3-phosphoshikimate + phosphate. It participates in metabolic intermediate biosynthesis; chorismate biosynthesis; chorismate from D-erythrose 4-phosphate and phosphoenolpyruvate: step 6/7. In terms of biological role, catalyzes the transfer of the enolpyruvyl moiety of phosphoenolpyruvate (PEP) to the 5-hydroxyl of shikimate-3-phosphate (S3P) to produce enolpyruvyl shikimate-3-phosphate and inorganic phosphate. In Streptococcus suis (strain 98HAH33), this protein is 3-phosphoshikimate 1-carboxyvinyltransferase.